Consider the following 1390-residue polypeptide: DNA-directed RNA polymerase subunit beta' (1390 aa).

Residues C73, C75, C88, and C91 each coordinate Zn(2+). Residues D464, D466, and D468 each coordinate Mg(2+). 4 residues coordinate Zn(2+): C810, C884, C891, and C894. The segment at E1365 to T1390 is disordered.

It belongs to the RNA polymerase beta' chain family. As to quaternary structure, the RNAP catalytic core consists of 2 alpha, 1 beta, 1 beta' and 1 omega subunit. When a sigma factor is associated with the core the holoenzyme is formed, which can initiate transcription. Requires Mg(2+) as cofactor. The cofactor is Zn(2+).

It catalyses the reaction RNA(n) + a ribonucleoside 5'-triphosphate = RNA(n+1) + diphosphate. In terms of biological role, DNA-dependent RNA polymerase catalyzes the transcription of DNA into RNA using the four ribonucleoside triphosphates as substrates. The protein is DNA-directed RNA polymerase subunit beta' of Methylacidiphilum infernorum (isolate V4) (Methylokorus infernorum (strain V4)).